Consider the following 250-residue polypeptide: Flavin-dependent thymidylate synthase (250 aa).

Residues 7-233 enclose the ThyX domain; it reads LSVELIACSS…PTVFGDFEIE (227 aa). Residues 92–95, 103–107, and arginine 172 contribute to the dUMP site; these read ELVR and QLSQR. FAD-binding positions include 95–97 and glutamine 103; that span reads RHR. The ThyX motif motif lies at 95–105; the sequence is RHRHFSFSQLS. Residues 188 to 190 and histidine 194 contribute to the FAD site; that span reads NFR. Residue arginine 199 participates in dUMP binding. Arginine 199 acts as the Involved in ionization of N3 of dUMP, leading to its activation in catalysis.

Belongs to the thymidylate synthase ThyX family. Homotetramer. FAD serves as cofactor.

The enzyme catalyses dUMP + (6R)-5,10-methylene-5,6,7,8-tetrahydrofolate + NADPH + H(+) = dTMP + (6S)-5,6,7,8-tetrahydrofolate + NADP(+). It functions in the pathway pyrimidine metabolism; dTTP biosynthesis. In terms of biological role, catalyzes the reductive methylation of 2'-deoxyuridine-5'-monophosphate (dUMP) to 2'-deoxythymidine-5'-monophosphate (dTMP) while utilizing 5,10-methylenetetrahydrofolate (mTHF) as the methyl donor, and NADPH and FADH(2) as the reductant. This is Flavin-dependent thymidylate synthase from Corynebacterium glutamicum (strain ATCC 13032 / DSM 20300 / JCM 1318 / BCRC 11384 / CCUG 27702 / LMG 3730 / NBRC 12168 / NCIMB 10025 / NRRL B-2784 / 534).